The chain runs to 361 residues: Transcription factor TCP10 (361 aa).

One can recognise a TCP domain in the interval 29-87 (RKDRHSKVFTSKGPRDRRVRLSAHTAIQFYDVQDRLGYDRPSKAVDWLIKKAKTAIDKL). Disordered stretches follow at residues 220-259 (DLTM…QPSM) and 295-317 (SWDH…SMFA). Over residues 295-304 (SWDHHQTTSD) the composition is skewed to basic and acidic residues.

In terms of assembly, interacts with AHP1, AHP2 and AHP3. Interacts with SPL. In terms of tissue distribution, mostly detected in lateral organs, such as leaves and flowers. Expressed in cotyledons, particularly in the vascular region, in leaves, roots, stems, buds, flowers and immature siliques.

The protein localises to the nucleus. Its function is as follows. Plays a pivotal role in the control of morphogenesis of shoot organs by negatively regulating the expression of boundary-specific genes such as CUC genes, probably through the induction of miRNA (e.g. miR164). Participates in ovule development. This chain is Transcription factor TCP10 (TCP10), found in Arabidopsis thaliana (Mouse-ear cress).